Here is a 512-residue protein sequence, read N- to C-terminus: Lysine--tRNA ligase (512 aa).

Residues E408 and E415 each coordinate Mg(2+).

Belongs to the class-II aminoacyl-tRNA synthetase family. Homodimer. Requires Mg(2+) as cofactor.

It is found in the cytoplasm. It carries out the reaction tRNA(Lys) + L-lysine + ATP = L-lysyl-tRNA(Lys) + AMP + diphosphate. The protein is Lysine--tRNA ligase of Prochlorococcus marinus subsp. pastoris (strain CCMP1986 / NIES-2087 / MED4).